A 151-amino-acid polypeptide reads, in one-letter code: Putative pre-16S rRNA nuclease (151 aa).

The protein belongs to the YqgF nuclease family.

Its subcellular location is the cytoplasm. Functionally, could be a nuclease involved in processing of the 5'-end of pre-16S rRNA. The sequence is that of Putative pre-16S rRNA nuclease from Nitrosospira multiformis (strain ATCC 25196 / NCIMB 11849 / C 71).